Consider the following 41-residue polypeptide: MKIRNSLKSLRGRHRDNQIVRRKGRVYVINKTQKRYKARQG.

This sequence belongs to the bacterial ribosomal protein bL36 family.

The chain is Large ribosomal subunit protein bL36 from Methylobacterium nodulans (strain LMG 21967 / CNCM I-2342 / ORS 2060).